The primary structure comprises 81 residues: YcgL domain-containing protein Tgr7_3126 (81 aa).

In terms of domain architecture, YcgL spans Met-1–Leu-81.

The chain is YcgL domain-containing protein Tgr7_3126 from Thioalkalivibrio sulfidiphilus (strain HL-EbGR7).